We begin with the raw amino-acid sequence, 333 residues long: Serine racemase (333 aa).

Mg(2+) is bound at residue E13. S31, S32, I33, K51, and T52 together coordinate ATP. The Proton acceptor role is filled by K56. K56 is subject to N6-(pyridoxal phosphate)lysine. P69 is a binding site for Ca(2+). T71 carries the post-translational modification Phosphothreonine. T81 is a binding site for Ca(2+). Catalysis depends on S84, which acts as the Proton acceptor. N86 provides a ligand contact to pyridoxal 5'-phosphate. An ATP-binding site is contributed by Q89. S-nitrosocysteine is present on C113. Residue Y121 participates in ATP binding. Position 154 (N154) interacts with pyridoxal 5'-phosphate. Position 178 (D178) interacts with Mg(2+). Pyridoxal 5'-phosphate-binding residues include G185, G186, G187, G188, and M189. The Mg(2+) site is built by E210, A214, D216, and N247. Residues E210, A214, D216, and N247 each coordinate Ca(2+). Residues E210, A214, and D216 each contribute to the Mn(2+) site. An ATP-binding site is contributed by K279. A pyridoxal 5'-phosphate-binding site is contributed by S313. An ATP-binding site is contributed by N316.

This sequence belongs to the serine/threonine dehydratase family. Homodimer. The cofactor is Mg(2+). Requires Mn(2+) as cofactor. It depends on Ca(2+) as a cofactor. Pyridoxal 5'-phosphate serves as cofactor. Post-translationally, S-nitrosylated, leading to decrease the enzyme activity. Expressed in the cerebellum and frontal cortex (at protein level).

The catalysed reaction is L-serine = D-serine. It catalyses the reaction D-serine = pyruvate + NH4(+). The enzyme catalyses L-serine = pyruvate + NH4(+). With respect to regulation, allosterically activated by magnesium, and possibly also other divalent metal cations. Allosterically activated by ATP, ADP or GTP. Competitively inhibited by malonate. Catalyzes the synthesis of D-serine from L-serine. D-serine is a key coagonist with glutamate at NMDA receptors. Has dehydratase activity towards both L-serine and D-serine. This is Serine racemase (Srr) from Rattus norvegicus (Rat).